A 319-amino-acid chain; its full sequence is ATP-dependent 6-phosphofructokinase (319 aa).

Glycine 11 contacts ATP. Residues 21–25 (RSVVR) and aspartate 59 each bind ADP. ATP-binding positions include 72–73 (RC) and 102–105 (GDGS). Position 103 (aspartate 103) interacts with Mg(2+). 125–127 (TID) contributes to the substrate binding site. Catalysis depends on aspartate 127, which acts as the Proton acceptor. Arginine 154 is an ADP binding site. Substrate is bound by residues arginine 162 and 169 to 171 (MGR). ADP contacts are provided by residues 185 to 187 (GAE), arginine 211, and 213 to 215 (KKH). Substrate-binding positions include glutamate 222, arginine 243, and 249 to 252 (HVQR).

The protein belongs to the phosphofructokinase type A (PFKA) family. ATP-dependent PFK group I subfamily. Prokaryotic clade 'B1' sub-subfamily. As to quaternary structure, homotetramer. The cofactor is Mg(2+).

The protein resides in the cytoplasm. It catalyses the reaction beta-D-fructose 6-phosphate + ATP = beta-D-fructose 1,6-bisphosphate + ADP + H(+). Its pathway is carbohydrate degradation; glycolysis; D-glyceraldehyde 3-phosphate and glycerone phosphate from D-glucose: step 3/4. Its activity is regulated as follows. Allosterically activated by ADP and other diphosphonucleosides, and allosterically inhibited by phosphoenolpyruvate. Functionally, catalyzes the phosphorylation of D-fructose 6-phosphate to fructose 1,6-bisphosphate by ATP, the first committing step of glycolysis. The chain is ATP-dependent 6-phosphofructokinase from Geobacillus stearothermophilus (Bacillus stearothermophilus).